The chain runs to 391 residues: Mycofactocin maturase MftC (391 aa).

Positions Leu16–Ser232 constitute a Radical SAM core domain. 11 residues coordinate [4Fe-4S] cluster: Cys30, Cys34, Cys37, Cys251, Cys258, Cys269, Cys310, Cys313, Cys319, Cys323, and Cys341. The segment at Glu340–Val391 is disordered. The span at Leu350–Ser364 shows a compositional bias: basic and acidic residues.

Belongs to the radical SAM superfamily. [4Fe-4S] cluster serves as cofactor.

The enzyme catalyses [mycofactocin precursor peptide]-C-terminal glycyl-L-valyl-L-tyrosine + S-adenosyl-L-methionine = [mycofactocin precursor peptide]-C-terminal glycyl-N-{[2-(4-hydroxyphenyl)ethenyl]-3-methylbutanamide} + 5'-deoxyadenosine + L-methionine + CO2. The catalysed reaction is [mycofactocin precursor peptide]-C-terminal glycyl-N-{[2-(4-hydroxyphenyl)ethenyl]-3-methylbutanamide} + AH2 + S-adenosyl-L-methionine = [mycofactocin precursor peptide]-C-terminal glycyl-N-{5-[(4-hydroxyphenyl)methyl]-4,4-dimethyl-2-oxopyrrolidin-3-yl}acetamide + 5'-deoxyadenosine + L-methionine + A + H(+). Its function is as follows. Radical S-adenosylmethionine (SAM) enzyme responsible for the first step of the biosynthesis of the enzyme cofactor mycofactocin (MFT). Catalyzes two reactions at the C-terminus of the mycofactocin precursor (the MftA peptide). The first one is the oxidative decarboxylation of the C-terminal L-tyrosine of MftA, forming an unsaturated tyramine moiety. The second reaction is the cross-linking of the tyramine with the penultimate L-valine residue, forming a five-membered lactam ring. Its activity requires the presence of the MftB chaperone. The sequence is that of Mycofactocin maturase MftC (mftC) from Mycobacterium tuberculosis (strain CDC 1551 / Oshkosh).